Here is a 254-residue protein sequence, read N- to C-terminus: Alcohol dehydrogenase (254 aa).

NAD(+) is bound at residue phenylalanine 10 to leucine 33. Serine 138 contacts substrate. Tyrosine 151 serves as the catalytic Proton acceptor.

This sequence belongs to the short-chain dehydrogenases/reductases (SDR) family. In terms of assembly, homodimer.

It catalyses the reaction a primary alcohol + NAD(+) = an aldehyde + NADH + H(+). The catalysed reaction is a secondary alcohol + NAD(+) = a ketone + NADH + H(+). The polypeptide is Alcohol dehydrogenase (Adh) (Drosophila borealis (Fruit fly)).